A 430-amino-acid chain; its full sequence is Tol-Pal system protein TolB (430 aa).

The signal sequence occupies residues 1 to 21 (MKQAFRLMVGLLVLWASVLHA).

The protein belongs to the TolB family. As to quaternary structure, the Tol-Pal system is composed of five core proteins: the inner membrane proteins TolA, TolQ and TolR, the periplasmic protein TolB and the outer membrane protein Pal. They form a network linking the inner and outer membranes and the peptidoglycan layer.

Its subcellular location is the periplasm. Functionally, part of the Tol-Pal system, which plays a role in outer membrane invagination during cell division and is important for maintaining outer membrane integrity. TolB occupies a key intermediary position in the Tol-Pal system because it communicates directly with both membrane-embedded components, Pal in the outer membrane and TolA in the inner membrane. In Edwardsiella ictaluri (strain 93-146), this protein is Tol-Pal system protein TolB.